Here is a 401-residue protein sequence, read N- to C-terminus: Probable trafficking protein particle complex subunit 13 homolog (401 aa).

Belongs to the TRAPPC13 family.

This Caenorhabditis elegans protein is Probable trafficking protein particle complex subunit 13 homolog.